A 199-amino-acid chain; its full sequence is Pyridoxine/pyridoxamine 5'-phosphate oxidase (199 aa).

Residues 44–49 (RTVLLK), 59–60 (YT), lysine 66, and glutamine 91 each bind FMN. Residue lysine 49 participates in substrate binding. Substrate is bound by residues tyrosine 109, arginine 113, and serine 117. Residues 126-127 (QS) and tryptophan 171 each bind FMN. Residue 177 to 179 (RLH) coordinates substrate. Arginine 181 is a binding site for FMN.

This sequence belongs to the pyridoxamine 5'-phosphate oxidase family. As to quaternary structure, homodimer. It depends on FMN as a cofactor.

It catalyses the reaction pyridoxamine 5'-phosphate + O2 + H2O = pyridoxal 5'-phosphate + H2O2 + NH4(+). The catalysed reaction is pyridoxine 5'-phosphate + O2 = pyridoxal 5'-phosphate + H2O2. The protein operates within cofactor metabolism; pyridoxal 5'-phosphate salvage; pyridoxal 5'-phosphate from pyridoxamine 5'-phosphate: step 1/1. Its pathway is cofactor metabolism; pyridoxal 5'-phosphate salvage; pyridoxal 5'-phosphate from pyridoxine 5'-phosphate: step 1/1. Catalyzes the oxidation of either pyridoxine 5'-phosphate (PNP) or pyridoxamine 5'-phosphate (PMP) into pyridoxal 5'-phosphate (PLP). In Xanthomonas campestris pv. campestris (strain 8004), this protein is Pyridoxine/pyridoxamine 5'-phosphate oxidase.